We begin with the raw amino-acid sequence, 1047 residues long: uncharacterized protein (1047 aa).

Position 17 is an N6-acetyllysine (lysine 17). 2 disordered regions span residues 172 to 208 (PPCS…GSFS) and 236 to 283 (RNSK…PQAL). Serine 208 is modified (phosphoserine). The span at 237–254 (NSKQAMSEGPSSPWTQLA) shows a compositional bias: polar residues. The span at 268–283 (HYPPPHHPPPHPPQAL) shows a compositional bias: pro residues. 2 positions are modified to phosphoserine: serine 299 and serine 391. Phosphothreonine is present on threonine 397. 7 disordered regions span residues 448 to 469 (EKLQ…DSPV), 482 to 504 (ECQS…PVID), 519 to 567 (PAPE…LRGS), 668 to 690 (PSTP…GPIG), 714 to 763 (VAVA…GDSL), 931 to 1004 (EAGA…TLKA), and 1021 to 1047 (PTWG…SHHL). Residues serine 455, serine 496, and serine 497 each carry the phosphoserine modification. Composition is skewed to low complexity over residues 729–741 (PARA…ARDP) and 751–762 (PAPASTSAPGDS). Phosphoserine occurs at positions 936, 956, 988, and 996. Over residues 978 to 996 (AAAGEESCGASPTPATSAS) the composition is skewed to low complexity.

This is an uncharacterized protein from Homo sapiens (Human).